The primary structure comprises 2116 residues: Non-structural polyprotein p200 (2116 aa).

The segment at 36-49 (EVRDVVTAAQKRAI) is required for efficient proteolysis and P150-P90 interaction. The Alphavirus-like MT domain maps to 57-247 (VFTQMQVSDH…TRPCTTRIYQ (191 aa)). Residues 711–720 (RAGPGQSAAT) are compositionally biased toward low complexity. Residues 711–780 (RAGPGQSAAT…VLPTSAGPAD (70 aa)) form a disordered region. Pro residues-rich tracts occupy residues 721–730 (SPPPGDPPPP) and 745–767 (TPPP…PPRA). 3 consecutive short sequence motifs (pxxPxR; class II SH3-binding) follow at residues 727–732 (PPPPRR), 747–752 (PPAPAR), and 761–766 (PPAPPR). Residues 806–985 (SDIVESYARA…LTHASVLVGA (180 aa)) enclose the Macro domain. The interval 992-1031 (VSPPPTEPLASCPAGDPGRPAQRSASPPATPLGDATAPEP) is disordered. The 302-residue stretch at 1000 to 1301 (LASCPAGDPG…WLAVPLSRGG (302 aa)) folds into the Peptidase C27 domain. Cys-1152 serves as the catalytic For cysteine protease activity. The segment at 1152-1183 (CWFRAAANVAQAARACGAYTSAGCPKCAYGRA) is interaction with host CALM1. Residues Cys-1175, Cys-1178, Cys-1227, and His-1273 each coordinate Zn(2+). Positions 1193–1228 (FAALSQRWSASHADASPDGTGDPLDPLMETVGCACS) are EF-hand-like. His-1273 acts as the For cysteine protease activity in catalysis. Positions 1320–1468 (EVRRLGDDAM…VPDRWPTERS (149 aa)) constitute a (+)RNA virus helicase ATP-binding domain. Residue 1352–1359 (MAAGAGKT) coordinates a ribonucleoside 5'-triphosphate. The 141-residue stretch at 1469 to 1609 (RHTWRFPDCW…ELKEVPAGID (141 aa)) folds into the (+)RNA virus helicase C-terminal domain. An involved in P150-P90 interaction region spans residues 1700-1900 (YRAGEDGSTL…VELEISAALL (201 aa)). A RdRp catalytic domain is found at 1870-1981 (TNAIEVDFTE…FLPEGARSAA (112 aa)). The short motif at 1902–1906 (LPCAE) is the Human RB1 binding element.

In terms of assembly, interacts with RNA-directed RNA polymerase p90. Interacts with host CALM1; this interaction is necessary for the protease activity and viral infectivity. Interacts with host C1QBP. Interacts with the capsid protein. Interacts with human RB1/retinoblastoma protein. Interacts with protease/methyltransferase p150. The cofactor is Zn(2+). Post-translationally, specific enzymatic cleavage by its own cysteine protease yield mature proteins p150 and p90.

Its subcellular location is the host membrane. The protein resides in the host cytoplasm. It localises to the host perinuclear region. It catalyses the reaction RNA(n) + a ribonucleoside 5'-triphosphate = RNA(n+1) + diphosphate. The catalysed reaction is a ribonucleoside 5'-triphosphate + H2O = a ribonucleoside 5'-diphosphate + phosphate + H(+). It carries out the reaction ATP + H2O = ADP + phosphate + H(+). Functionally, probable principal replicase for the negative-strand DNA, which replicates the 40S (+) genomic RNA into (-) antigenomic RNA. It cannot replicate the (-) into (+) until cleaved into p150 and p90 mature proteins. Protease that cleaves the precursor polyprotein into two mature products. Together with RNA-directed RNA polymerase p90, replicates the 40S genomic and antigenomic RNA by recognizing replications specific signals. The heterodimer P150/p90 is probably the principal replicase for positive-strand genomic RNA and the 24S subgenomic RNA, which codes for structural proteins. Responsible for the mRNA-capping of the viral mRNAs. This function is necessary since all viral RNAs are synthesized in the cytoplasm, and host capping enzymes are restricted to the nucleus. Forms fibers late in the infection that may be involved in cell-to-cell spread of the virus RNA in the absence of virus particle formation. Its function is as follows. Together with protease/methyltransferase p150, replicates the 40S genomic and antigenomic RNA by recognizing replications specific signals. The heterodimer P150/p90 is probably the principal replicase for positive-strand genomic RNA and the 24S subgenomic RNA, which codes for structural proteins. A helicase activity is probably also present. This Rubella virus (strain TO-336) (RUBV) protein is Non-structural polyprotein p200.